The sequence spans 689 residues: DNA-directed RNA polymerase subunit beta' (689 aa).

Positions 69, 71, 87, and 90 each coordinate Zn(2+). Positions 489, 491, and 493 each coordinate Mg(2+).

Belongs to the RNA polymerase beta' chain family. RpoC1 subfamily. As to quaternary structure, in plastids the minimal PEP RNA polymerase catalytic core is composed of four subunits: alpha, beta, beta', and beta''. When a (nuclear-encoded) sigma factor is associated with the core the holoenzyme is formed, which can initiate transcription. It depends on Mg(2+) as a cofactor. Zn(2+) serves as cofactor.

It localises to the plastid. The protein resides in the chloroplast. It catalyses the reaction RNA(n) + a ribonucleoside 5'-triphosphate = RNA(n+1) + diphosphate. Its function is as follows. DNA-dependent RNA polymerase catalyzes the transcription of DNA into RNA using the four ribonucleoside triphosphates as substrates. The protein is DNA-directed RNA polymerase subunit beta' of Helianthus annuus (Common sunflower).